The following is a 414-amino-acid chain: Serine hydroxymethyltransferase (414 aa).

Residues Leu-116 and 120–122 (GHL) each bind (6S)-5,6,7,8-tetrahydrofolate. Lys-224 bears the N6-(pyridoxal phosphate)lysine mark. 348 to 350 (SPF) contacts (6S)-5,6,7,8-tetrahydrofolate.

Belongs to the SHMT family. As to quaternary structure, homodimer. The cofactor is pyridoxal 5'-phosphate.

The protein localises to the cytoplasm. The catalysed reaction is (6R)-5,10-methylene-5,6,7,8-tetrahydrofolate + glycine + H2O = (6S)-5,6,7,8-tetrahydrofolate + L-serine. It functions in the pathway one-carbon metabolism; tetrahydrofolate interconversion. The protein operates within amino-acid biosynthesis; glycine biosynthesis; glycine from L-serine: step 1/1. In terms of biological role, catalyzes the reversible interconversion of serine and glycine with tetrahydrofolate (THF) serving as the one-carbon carrier. This reaction serves as the major source of one-carbon groups required for the biosynthesis of purines, thymidylate, methionine, and other important biomolecules. Also exhibits THF-independent aldolase activity toward beta-hydroxyamino acids, producing glycine and aldehydes, via a retro-aldol mechanism. In Campylobacter jejuni subsp. doylei (strain ATCC BAA-1458 / RM4099 / 269.97), this protein is Serine hydroxymethyltransferase.